Here is a 350-residue protein sequence, read N- to C-terminus: MKKTAIAIAVALAGFATVAQAAPKDNTWYAGGKLGWSQFHDTGWYNSNLNNNGPTHESQLGAGAFGGYQVNPYLGFEMGYDWLGRMPYKGVKVNGAFSSQAVQLTAKLGYPITDDLDIYTRLGGMVWRADSSNSIAGDNHDTGVSPVFAGGVEWAMTRDIATRLEYQWVNNIGDAGTVGVRPDNGMLSVGVSYRFGQEDNAPVVAPAPAPAPEVTTKTFTLKSDVLFNFNKATLKPEGQQALDQLYTQLSNMDPKDGSAVVLGYTDRIGSEQYNQKLSEKRAQSVVDYLVAKGIPANKISARGMGESDPVTGNTCDNVKARAALIDCLAPDRRVAIEVKGYKDVVTQPQA.

The first 21 residues, Met-1–Ala-21, serve as a signal peptide directing secretion. 8 beta stranded membrane passes run Thr-27–Ser-37, Gln-59–Val-70, Leu-74–Trp-82, Gln-100–Pro-111, Leu-116–Gly-124, Pro-146–Ala-155, Ile-160–Gln-167, and Met-186–Arg-194. Tandem repeats lie at residues Ala-205–Pro-206, Ala-207–Pro-208, Ala-209–Pro-210, and Ala-211–Pro-212. Positions Ala-205 to Pro-212 are 4 X 2 AA tandem repeats of A-P. An OmpA-like domain is found at Val-214–Lys-342. A disulfide bridge connects residues Cys-315 and Cys-327.

The protein belongs to the outer membrane OOP (TC 1.B.6) superfamily. OmpA family. In terms of assembly, monomer and homodimer.

It localises to the cell outer membrane. Functionally, with TolR probably plays a role in maintaining the position of the peptidoglycan cell wall in the periplasm. Acts as a porin with low permeability that allows slow penetration of small solutes; an internal gate slows down solute passage. In terms of biological role, required for conjugation with F-type plasmids; probably serves as the mating receptor on recipient cells. This Klebsiella aerogenes (Enterobacter aerogenes) protein is Outer membrane protein A.